Consider the following 397-residue polypeptide: Methyltransferase/ribosomally synthesized type I borosin cyclic peptide precursor mroMa1 (397 aa).

The segment at methionine 1 to arginine 246 is methyltransferase domain. Catalysis depends on residues arginine 70, tyrosine 74, and tyrosine 96. S-adenosyl-L-methionine contacts are provided by tyrosine 96, histidine 98, valine 101, alanine 128, glutamine 170, glycine 208, serine 239, and threonine 240. The tract at residues threonine 247 to leucine 365 is clasp domain. A precursor leader region spans residues proline 366–alanine 388. 2 positions are modified to N-methylisoleucine: isoleucine 391 and isoleucine 392. Tyrosine 393 bears the N-methyltyrosine mark. Isoleucine 394 bears the N-methylisoleucine mark. Valine 395 is modified (N-methylvaline).

The protein in the N-terminal section; belongs to the precorrin methyltransferase family. As to quaternary structure, homodimer. Post-translationally, mroMA automethylates at Ile-391, Ile-392, Tyr-393, Ile-394 and Val-395 before being processed by the a prolyloligopeptidase which likely forms a peptidyl ester upon removal of the follower propeptide, which then undergoes macrocyclization with the N-terminus of the modified core peptide. Peptide backbone alpha-N-methylations change the physicochemical properties of amide bonds to provide structural constraints and other favorable characteristics including biological membrane permeability to peptides.

It functions in the pathway secondary metabolite biosynthesis. In terms of biological role, fusion protein of the methyltransferase mroM1 and a type I borosin core peptide; part of the gene cluster that mediates the biosynthesis of a type I borosin, a highly methylated cyclic peptide with potent biological activities. Type I borosins derive from the C-terminus of the fusion protein, and it is the same protein that methylates its own C-terminus using S-adenosyl methionine (SAM). The C-terminus is subsequently cleaved off and macrocyclized by a prolyloligopeptidase to give the final product. This chain is Methyltransferase/ribosomally synthesized type I borosin cyclic peptide precursor mroMa1, found in Mycena rosella (Pink bonnet).